Reading from the N-terminus, the 744-residue chain is Polyribonucleotide nucleotidyltransferase (744 aa).

Positions 515 and 521 each coordinate Mg(2+). A KH domain is found at 581–640 (PRVITVQVPVDKIGEVIGPKGKMINQIQDDTGADISIEDDGTVFIGATDGPSAEAARQAI). The 73-residue stretch at 652–724 (GERFVGTVVK…PRGKLSLHAV (73 aa)) folds into the S1 motif domain.

The protein belongs to the polyribonucleotide nucleotidyltransferase family. It depends on Mg(2+) as a cofactor.

Its subcellular location is the cytoplasm. It catalyses the reaction RNA(n+1) + phosphate = RNA(n) + a ribonucleoside 5'-diphosphate. In terms of biological role, involved in mRNA degradation. Catalyzes the phosphorolysis of single-stranded polyribonucleotides processively in the 3'- to 5'-direction. The sequence is that of Polyribonucleotide nucleotidyltransferase from Beutenbergia cavernae (strain ATCC BAA-8 / DSM 12333 / CCUG 43141 / JCM 11478 / NBRC 16432 / NCIMB 13614 / HKI 0122).